The following is a 497-amino-acid chain: Probable malate:quinone oxidoreductase (497 aa).

Belongs to the MQO family. Requires FAD as cofactor.

The enzyme catalyses (S)-malate + a quinone = a quinol + oxaloacetate. It functions in the pathway carbohydrate metabolism; tricarboxylic acid cycle; oxaloacetate from (S)-malate (quinone route): step 1/1. This Bacillus cereus (strain ATCC 14579 / DSM 31 / CCUG 7414 / JCM 2152 / NBRC 15305 / NCIMB 9373 / NCTC 2599 / NRRL B-3711) protein is Probable malate:quinone oxidoreductase.